We begin with the raw amino-acid sequence, 109 residues long: Keratin, type II microfibrillar (109 aa).

A linker 1 region spans residues 1–10; sequence QNRQCCESNL. The IF rod domain occupies 1 to 109; it reads QNRQCCESNL…RLYEEEIRVL (109 aa). Residues 11-109 form a coil 1B region; it reads EPLFSGYIET…RLYEEEIRVL (99 aa).

Belongs to the intermediate filament family.

Functionally, wool microfibrillar keratin. This Ovis aries (Sheep) protein is Keratin, type II microfibrillar.